The following is a 318-amino-acid chain: Aldo-keto reductase family 1 member C21 (318 aa).

Residue 20-24 participates in NADP(+) binding; it reads GFGTA. Substrate is bound at residue Lys-31. Asp-50 provides a ligand contact to NADP(+). The active-site Proton donor is Tyr-55. His-117 serves as a coordination point for substrate. Residues 166-167, Gln-190, 216-224, and 270-280 contribute to the NADP(+) site; these read SN, YGVLGTQRY, and TSLKEERIKEN.

Belongs to the aldo/keto reductase family. In terms of assembly, monomer.

It is found in the cytoplasm. The catalysed reaction is androsterone + NADP(+) = 5alpha-androstan-3,17-dione + NADPH + H(+). The enzyme catalyses androsterone + NAD(+) = 5alpha-androstan-3,17-dione + NADH + H(+). In terms of biological role, NADP-dependent 17-alpha-hydroxysteroid dehydrogenase that converts 5-alpha-androstane-3,17-dione into androsterone. Has lower 3-alpha-hydroxysteroid dehydrogenase activity. Has broad substrate specificity and acts on various 17-alpha-hydroxysteroids, 17-ketosteroids, 3-alpha hydroxysteroids and 3-ketosteroids. Reduction of keto groups is strictly stereoselective. Reduction of 17-ketosteroids yields only 17-alpha-hydroxysteroids. Likewise, reduction of 3-ketosteroids yields only 3-alpha-hydroxysteroids. This chain is Aldo-keto reductase family 1 member C21 (Akr1c21), found in Rattus norvegicus (Rat).